Reading from the N-terminus, the 146-residue chain is MTLRLNELAPAEGAKRDNRRLGRGIGSGVGKTGGRGVKGQKSRKSGGVRPGFEGGQTAIYRRLPKFGFTSQIALKTAEVRLSELNKVEGEIVSLETLKAANVVRRDQVRARVVLSGEVTRAFTVQGVALTKGAQAAIEAAGGKVEE.

A disordered region spans residues 1–54 (MTLRLNELAPAEGAKRDNRRLGRGIGSGVGKTGGRGVKGQKSRKSGGVRPGFEG). Over residues 23–37 (RGIGSGVGKTGGRGV) the composition is skewed to gly residues.

This sequence belongs to the universal ribosomal protein uL15 family. As to quaternary structure, part of the 50S ribosomal subunit.

In terms of biological role, binds to the 23S rRNA. This Acinetobacter baylyi (strain ATCC 33305 / BD413 / ADP1) protein is Large ribosomal subunit protein uL15.